The chain runs to 365 residues: Chorismate synthase (365 aa).

The NADP(+) site is built by Arg48 and Arg54. Residues 125–127 (RSS), 237–238 (NA), Gly277, 292–296 (KPTSS), and Arg318 each bind FMN.

It belongs to the chorismate synthase family. As to quaternary structure, homotetramer. FMNH2 serves as cofactor.

The catalysed reaction is 5-O-(1-carboxyvinyl)-3-phosphoshikimate = chorismate + phosphate. The protein operates within metabolic intermediate biosynthesis; chorismate biosynthesis; chorismate from D-erythrose 4-phosphate and phosphoenolpyruvate: step 7/7. In terms of biological role, catalyzes the anti-1,4-elimination of the C-3 phosphate and the C-6 proR hydrogen from 5-enolpyruvylshikimate-3-phosphate (EPSP) to yield chorismate, which is the branch point compound that serves as the starting substrate for the three terminal pathways of aromatic amino acid biosynthesis. This reaction introduces a second double bond into the aromatic ring system. The chain is Chorismate synthase from Polaromonas naphthalenivorans (strain CJ2).